We begin with the raw amino-acid sequence, 805 residues long: Nitrite reductase [NAD(P)H] (805 aa).

FAD is bound at residue 43 to 79 (YNRILLSKVLQGDTDIKDITLNDWDWYEENNIQLYTN). NADP(+) is bound at residue 193–223 (LQNELEKQGMTFLLEKQTEEIVGDDRVEGLR). Cys-418, Cys-420, Cys-453, and Cys-456 together coordinate [2Fe-2S] cluster. Cys-635, Cys-641, Cys-675, and Cys-679 together coordinate [4Fe-4S] cluster. Siroheme is bound at residue Cys-679.

This sequence belongs to the nitrite and sulfite reductase 4Fe-4S domain family. Homodimer. Requires siroheme as cofactor. [2Fe-2S] cluster is required as a cofactor. It depends on [4Fe-4S] cluster as a cofactor. The cofactor is FAD.

It carries out the reaction NH4(+) + 3 NADP(+) + 2 H2O = nitrite + 3 NADPH + 5 H(+). The enzyme catalyses NH4(+) + 3 NAD(+) + 2 H2O = nitrite + 3 NADH + 5 H(+). The protein operates within nitrogen metabolism; nitrate reduction (assimilation). Functionally, required for nitrite assimilation. In Bacillus subtilis (strain 168), this protein is Nitrite reductase [NAD(P)H] (nasD).